The sequence spans 348 residues: Chitinase (348 aa).

The N-terminal stretch at 1-29 (MKLKKIIPAFPLLSTVAVGLWLTPTQASA) is a signal peptide. The GH18 domain maps to 42-348 (KVLVGYWHNW…FATRYSNLVK (307 aa)). Residue E161 is the Proton donor of the active site.

The protein belongs to the glycosyl hydrolase 18 family.

It is found in the secreted. The catalysed reaction is Random endo-hydrolysis of N-acetyl-beta-D-glucosaminide (1-&gt;4)-beta-linkages in chitin and chitodextrins.. It participates in glycan degradation; chitin degradation. Functionally, involved in chitin degradation. Catalyzes the cleavage of glycosidic linkages in chitooligosaccharides and in alpha- and beta-chitin. Its activity on chitooligosaccharides increases considerably with degrees of polymerization (the initial rate of hydrolysis for GlcNAc5 is about 130-fold higher than that for GlcNAc3). Its activity is greatly stimulated in the presence of the lytic chitin monooxygenase EfCBM33A, which attacks the crystalline structure of chitin and makes the polymer more accessible to the chitinase; combining the two enzymes leads to rapid and complete depolymerization of crystalline chitin, especially with beta-chitin as a substrate. Is likely involved in a chitin degradation pathway that allows E.faecalis V583 to grow on chitin as a carbon source. The sequence is that of Chitinase from Enterococcus faecalis (strain ATCC 700802 / V583).